A 159-amino-acid chain; its full sequence is Ribosomal RNA large subunit methyltransferase H (159 aa).

S-adenosyl-L-methionine is bound by residues Leu-76, Gly-108, and 127 to 132; that span reads FSKMTF.

The protein belongs to the RNA methyltransferase RlmH family. Homodimer.

The protein resides in the cytoplasm. It carries out the reaction pseudouridine(1915) in 23S rRNA + S-adenosyl-L-methionine = N(3)-methylpseudouridine(1915) in 23S rRNA + S-adenosyl-L-homocysteine + H(+). In terms of biological role, specifically methylates the pseudouridine at position 1915 (m3Psi1915) in 23S rRNA. This chain is Ribosomal RNA large subunit methyltransferase H, found in Staphylococcus aureus (strain MSSA476).